We begin with the raw amino-acid sequence, 292 residues long: Probable endonuclease 4 (292 aa).

Residues histidine 71, histidine 111, glutamate 148, aspartate 182, histidine 185, histidine 217, aspartate 230, histidine 232, and glutamate 262 each coordinate Zn(2+).

Belongs to the AP endonuclease 2 family. Zn(2+) serves as cofactor.

The catalysed reaction is Endonucleolytic cleavage to 5'-phosphooligonucleotide end-products.. Its function is as follows. Endonuclease IV plays a role in DNA repair. It cleaves phosphodiester bonds at apurinic or apyrimidinic (AP) sites, generating a 3'-hydroxyl group and a 5'-terminal sugar phosphate. This chain is Probable endonuclease 4, found in Aster yellows witches'-broom phytoplasma (strain AYWB).